Here is a 223-residue protein sequence, read N- to C-terminus: Small ribosomal subunit protein uS5 (223 aa).

The segment at 1–66 (MPPQQQRGRG…AERAQAETEF (66 aa)) is disordered. The span at 13–22 (RGPGGPGGPG) shows a compositional bias: gly residues. The segment covering 53–66 (GGDKAERAQAETEF) has biased composition (basic and acidic residues). Residues 66–129 (FQERVVQIRR…SDARKALIRV (64 aa)) form the S5 DRBM domain.

The protein belongs to the universal ribosomal protein uS5 family. Part of the 30S ribosomal subunit. Contacts proteins S4 and S8.

Its function is as follows. With S4 and S12 plays an important role in translational accuracy. Functionally, located at the back of the 30S subunit body where it stabilizes the conformation of the head with respect to the body. The protein is Small ribosomal subunit protein uS5 of Gloeobacter violaceus (strain ATCC 29082 / PCC 7421).